The primary structure comprises 62 residues: uncharacterized protein (62 aa).

This is an uncharacterized protein from Methanocaldococcus jannaschii (strain ATCC 43067 / DSM 2661 / JAL-1 / JCM 10045 / NBRC 100440) (Methanococcus jannaschii).